The following is a 269-amino-acid chain: Thymidylate synthase (269 aa).

DUMP is bound by residues R21 and 125–126 (RR). Residue C145 is the Nucleophile of the active site. DUMP is bound by residues 171-174 (RSGD), N182, and 212-214 (HVY). A (6R)-5,10-methylene-5,6,7,8-tetrahydrofolate-binding site is contributed by D174. A268 is a (6R)-5,10-methylene-5,6,7,8-tetrahydrofolate binding site.

Belongs to the thymidylate synthase family. Bacterial-type ThyA subfamily. Homodimer.

It is found in the cytoplasm. The enzyme catalyses dUMP + (6R)-5,10-methylene-5,6,7,8-tetrahydrofolate = 7,8-dihydrofolate + dTMP. The protein operates within pyrimidine metabolism; dTTP biosynthesis. Catalyzes the reductive methylation of 2'-deoxyuridine-5'-monophosphate (dUMP) to 2'-deoxythymidine-5'-monophosphate (dTMP) while utilizing 5,10-methylenetetrahydrofolate (mTHF) as the methyl donor and reductant in the reaction, yielding dihydrofolate (DHF) as a by-product. This enzymatic reaction provides an intracellular de novo source of dTMP, an essential precursor for DNA biosynthesis. This is Thymidylate synthase from Cutibacterium acnes (strain DSM 16379 / KPA171202) (Propionibacterium acnes).